We begin with the raw amino-acid sequence, 100 residues long: Aspartyl/glutamyl-tRNA(Asn/Gln) amidotransferase subunit C (100 aa).

It belongs to the GatC family. In terms of assembly, heterotrimer of A, B and C subunits.

It carries out the reaction L-glutamyl-tRNA(Gln) + L-glutamine + ATP + H2O = L-glutaminyl-tRNA(Gln) + L-glutamate + ADP + phosphate + H(+). The catalysed reaction is L-aspartyl-tRNA(Asn) + L-glutamine + ATP + H2O = L-asparaginyl-tRNA(Asn) + L-glutamate + ADP + phosphate + 2 H(+). In terms of biological role, allows the formation of correctly charged Asn-tRNA(Asn) or Gln-tRNA(Gln) through the transamidation of misacylated Asp-tRNA(Asn) or Glu-tRNA(Gln) in organisms which lack either or both of asparaginyl-tRNA or glutaminyl-tRNA synthetases. The reaction takes place in the presence of glutamine and ATP through an activated phospho-Asp-tRNA(Asn) or phospho-Glu-tRNA(Gln). The chain is Aspartyl/glutamyl-tRNA(Asn/Gln) amidotransferase subunit C from Streptococcus pyogenes serotype M49 (strain NZ131).